Reading from the N-terminus, the 501-residue chain is Envelope glycoprotein C homolog (501 aa).

An N-terminal signal peptide occupies residues 1 to 27; it reads MLTPRVLRALGWTGLFFLLLSPSNVLG. The Virion surface portion of the chain corresponds to 28-465; sequence ASLSRDLETP…DATPSARGTP (438 aa). Asn46 carries N-linked (GlcNAc...) asparagine; by host glycosylation. A disordered region spans residues 53–86; it reads PLTEVPHAPSTESVSTNSESTNEHTITETTGKNA. The span at 62 to 72 shows a compositional bias: low complexity; it reads STESVSTNSES. Residues Asn91, Asn100, Asn120, Asn212, Asn354, Asn400, and Asn429 are each glycosylated (N-linked (GlcNAc...) asparagine; by host). The 99-residue stretch at 258 to 356 folds into the Ig-like domain; that stretch reads PASVDVLAPP…GDMISTTNAT (99 aa). The helical transmembrane segment at 466 to 492 threads the bilayer; the sequence is MVITVTAVLGLAVILGMGIIMTALCLY. Residues 493–501 are Cytoplasmic-facing; the sequence is NSTRKNIRL.

It belongs to the herpesviridae glycoprotein C family.

It is found in the secreted. Its subcellular location is the host cell membrane. In terms of biological role, may play an immunoevasive role in the pathogenesis of Marek's disease. It is a candidate for causing the early-stage immunosuppression that occurs after MDHV infection. The protein is Envelope glycoprotein C homolog (gC) of Gallus gallus (Chicken).